A 406-amino-acid chain; its full sequence is Tryptophan synthase beta chain (406 aa).

Position 95 is an N6-(pyridoxal phosphate)lysine (Lys95).

Belongs to the TrpB family. Tetramer of two alpha and two beta chains. Pyridoxal 5'-phosphate is required as a cofactor.

The catalysed reaction is (1S,2R)-1-C-(indol-3-yl)glycerol 3-phosphate + L-serine = D-glyceraldehyde 3-phosphate + L-tryptophan + H2O. Its pathway is amino-acid biosynthesis; L-tryptophan biosynthesis; L-tryptophan from chorismate: step 5/5. In terms of biological role, the beta subunit is responsible for the synthesis of L-tryptophan from indole and L-serine. The protein is Tryptophan synthase beta chain of Pseudomonas fluorescens (strain ATCC BAA-477 / NRRL B-23932 / Pf-5).